Reading from the N-terminus, the 198-residue chain is Ribonuclease 3-like protein 1 (198 aa).

The span at 85–110 (KKLAPKPDEEHTTTTKPISKDDESKT) shows a compositional bias: basic and acidic residues. Residues 85–115 (KKLAPKPDEEHTTTTKPISKDDESKTRRGSA) form a disordered region. The 78-residue stretch at 114-191 (SAKSVLHEMC…AEGALWYLEH (78 aa)) folds into the DRBM domain.

In Arabidopsis thaliana (Mouse-ear cress), this protein is Ribonuclease 3-like protein 1 (RTL1).